Consider the following 414-residue polypeptide: MTKNPKILSIVLAGGEGTRLMPLTRDRAKPAVPFGGVYRLIDFPLSNLVNSGYRQVVVLTQYKSHSLDRHISQVWRFSPLLGSYVSPVPAQQRLGKHWYLGSADAIYQTINIIEDVQPDIVVIVGADHVYRMDFEQMVQQHIESGAEFTVAGIRQPIEESNQFGVIEVDPDHPNMIKNFQEKPPTTTGLPDNPNQILASMGNYVANTKALFEALALDEKAADTKHDMGGDIAPYFASRNEAGVYDFNSNEIPGSTATDHAYWRDVGTIKQFYDAHMDLIAYVPEFNLYNQDWPIYTMSGNLPPAKFVHAGRDRLGHATDSIVSPGVIVSGGEVHHSVLSPNVRIHSWAQIVDSVLFDGVVINRRARVYKAILDKNVVLTENSTVGIDTEHDLARGFTVTPDGITVVPKNTIVDD.

Residues Y99, G164, 181–182, and S199 each bind alpha-D-glucose 1-phosphate; that span reads EK.

It belongs to the bacterial/plant glucose-1-phosphate adenylyltransferase family. As to quaternary structure, homotetramer.

It catalyses the reaction alpha-D-glucose 1-phosphate + ATP + H(+) = ADP-alpha-D-glucose + diphosphate. It functions in the pathway glycan biosynthesis; glycogen biosynthesis. Functionally, involved in the biosynthesis of ADP-glucose, a building block required for the elongation reactions to produce glycogen. Catalyzes the reaction between ATP and alpha-D-glucose 1-phosphate (G1P) to produce pyrophosphate and ADP-Glc. This chain is Glucose-1-phosphate adenylyltransferase, found in Bifidobacterium longum (strain DJO10A).